Consider the following 27-residue polypeptide: Nucleoside diphosphate kinase 2 (27 aa).

Residue K3 coordinates ATP.

The protein belongs to the NDK family. It depends on Mg(2+) as a cofactor.

It carries out the reaction a 2'-deoxyribonucleoside 5'-diphosphate + ATP = a 2'-deoxyribonucleoside 5'-triphosphate + ADP. The catalysed reaction is a ribonucleoside 5'-diphosphate + ATP = a ribonucleoside 5'-triphosphate + ADP. Functionally, major role in the synthesis of nucleoside triphosphates other than ATP. The ATP gamma phosphate is transferred to the NDP beta phosphate via a ping-pong mechanism, using a phosphorylated active-site intermediate. This is Nucleoside diphosphate kinase 2 from Pseudotsuga menziesii (Douglas-fir).